The chain runs to 230 residues: Sugar fermentation stimulation protein homolog (230 aa).

It belongs to the SfsA family.

The polypeptide is Sugar fermentation stimulation protein homolog (Clostridium perfringens (strain SM101 / Type A)).